A 233-amino-acid polypeptide reads, in one-letter code: Orotidine 5'-phosphate decarboxylase (233 aa).

Substrate-binding positions include aspartate 13, lysine 35, 62–71, threonine 122, arginine 182, glutamine 191, glycine 211, and arginine 212; that span reads DLKFHDIPNT. Catalysis depends on lysine 64, which acts as the Proton donor.

Belongs to the OMP decarboxylase family. Type 1 subfamily. In terms of assembly, homodimer.

It catalyses the reaction orotidine 5'-phosphate + H(+) = UMP + CO2. It participates in pyrimidine metabolism; UMP biosynthesis via de novo pathway; UMP from orotate: step 2/2. Its function is as follows. Catalyzes the decarboxylation of orotidine 5'-monophosphate (OMP) to uridine 5'-monophosphate (UMP). In Pseudomonas entomophila (strain L48), this protein is Orotidine 5'-phosphate decarboxylase.